A 301-amino-acid polypeptide reads, in one-letter code: Lycopene elongase/hydratase (301 aa).

The segment at 1–20 (MSADMAAQSESGEGGDDGRA) is disordered. A run of 9 helical transmembrane segments spans residues 39 to 59 (FWLY…SALA), 61 to 81 (LFGL…NVFL), 110 to 130 (PVNT…FAVA), 133 to 153 (VAWP…APPF), 160 to 180 (LLDS…YAAV), 186 to 206 (PMLA…FSAI), 229 to 249 (TYWY…AVDL), 252 to 272 (GALL…GVDV), and 276 to 296 (YWWY…GALW).

The protein belongs to the UbiA prenyltransferase family.

It localises to the cell membrane. The enzyme catalyses all-trans-lycopene + dimethylallyl diphosphate + H2O = dihydroisopentenyldehydrorhodopin + diphosphate. It carries out the reaction isopentenyldehydrorhodopin + dimethylallyl diphosphate + H2O = dihydrobisanhydrobacterioruberin + diphosphate. The protein operates within carotenoid biosynthesis. Involved in the biosynthesis of the acyclic C50 carotenoid bacterioruberin (BR). Acts as a bifunctional elongase/hydratase that catalyzes the elongation of lycopene by attaching a C(5) isoprene unit at C-2, as well as the hydroxylation of the previous end of the molecule. The enzyme acts at both ends of the substrate, and catalyzes the conversion of lycopene to the C(45) intermediate dihydroisopentenyldehydrorhodopin (DH-IDR) and the conversion of isopentenyldehydrorhodopin (IDR) to the C(50) carotenoid dihydrobisanhydrobacterioruberin (DH-BABR). Can also catalyze the conversion of lycopene to tetrahydrobisanhydrobacterioruberin (TH-BABR). The chain is Lycopene elongase/hydratase from Haloferax volcanii (strain ATCC 29605 / DSM 3757 / JCM 8879 / NBRC 14742 / NCIMB 2012 / VKM B-1768 / DS2) (Halobacterium volcanii).